Here is a 242-residue protein sequence, read N- to C-terminus: Protein odd-skipped-related 1 (242 aa).

C2H2-type zinc fingers lie at residues Phe-128–His-150, Phe-156–His-178, and His-184–His-207.

This sequence belongs to the Odd C2H2-type zinc-finger protein family.

Its subcellular location is the nucleus. May function as transcription regulator. Essential for larval development. Required for morphogenesis and function of the digestive tract. The sequence is that of Protein odd-skipped-related 1 from Caenorhabditis elegans.